The sequence spans 417 residues: Tyrosine--tRNA ligase (417 aa).

Tyrosine 39 provides a ligand contact to L-tyrosine. The short motif at 44–53 (PTASSLHAGS) is the 'HIGH' region element. L-tyrosine is bound by residues tyrosine 176 and glutamine 180. Positions 236-240 (KMGKS) match the 'KMSKS' region motif. Lysine 239 provides a ligand contact to ATP. Residues 350–417 (TGLLILLVQA…KKKHVLIKPL (68 aa)) form the S4 RNA-binding domain.

This sequence belongs to the class-I aminoacyl-tRNA synthetase family. TyrS type 1 subfamily. In terms of assembly, homodimer.

The protein localises to the cytoplasm. It carries out the reaction tRNA(Tyr) + L-tyrosine + ATP = L-tyrosyl-tRNA(Tyr) + AMP + diphosphate + H(+). Its function is as follows. Catalyzes the attachment of tyrosine to tRNA(Tyr) in a two-step reaction: tyrosine is first activated by ATP to form Tyr-AMP and then transferred to the acceptor end of tRNA(Tyr). This chain is Tyrosine--tRNA ligase, found in Bartonella henselae (strain ATCC 49882 / DSM 28221 / CCUG 30454 / Houston 1) (Rochalimaea henselae).